The primary structure comprises 578 residues: PX domain-containing protein kinase-like protein (578 aa).

Positions 14-126 (LDDTVPLTAA…KFLDPNNYSA (113 aa)) constitute a PX domain. Residues 88–481 (FIAERQKGLQ…LENSEEHSAK (394 aa)) enclose the Protein kinase domain. Basic residues-rich tracts occupy residues 437–448 (IHQHRRLTRAQS) and 457–469 (KKRK…KSKR). Disordered regions lie at residues 437 to 548 (IHQH…NGMS) and 559 to 578 (FQKG…PKIG). The span at 483-513 (SNSNNSAGSGASSPLTSPSSPTPPSTSGISA) shows a compositional bias: low complexity. Residues 514-530 (LPPPPPPPPPPAAPLPP) are compositionally biased toward pro residues. The WH2 domain occupies 548–567 (SRGALLSSIQNFQKGTLRKA). Basic and acidic residues predominate over residues 568-578 (KTCDHSAPKIG).

Belongs to the protein kinase superfamily. In terms of tissue distribution, widely expressed in all tissues examined except in heart. Isoform 1 is expressed in high levels in the brain, skeletal muscle, spleen and testis. Isoform 7 expression has yet to be demonstrated.

It localises to the cytoplasm. It is found in the cell membrane. Functionally, binds to and modulates brain Na,K-ATPase subunits ATP1B1 and ATP1B3 and may thereby participate in the regulation of electrical excitability and synaptic transmission. May not display kinase activity. In Homo sapiens (Human), this protein is PX domain-containing protein kinase-like protein.